The chain runs to 670 residues: DNA ligase (670 aa).

NAD(+)-binding positions include 31 to 35, 76 to 77, and glutamate 108; these read DAEYD and SL. Lysine 110 functions as the N6-AMP-lysine intermediate in the catalytic mechanism. Positions 131, 166, 271, and 295 each coordinate NAD(+). Residues cysteine 388, cysteine 391, cysteine 406, and cysteine 412 each contribute to the Zn(2+) site. Positions 579–668 constitute a BRCT domain; sequence NIGGSLSGKK…NTPALKKETS (90 aa).

This sequence belongs to the NAD-dependent DNA ligase family. LigA subfamily. Mg(2+) is required as a cofactor. Mn(2+) serves as cofactor.

It carries out the reaction NAD(+) + (deoxyribonucleotide)n-3'-hydroxyl + 5'-phospho-(deoxyribonucleotide)m = (deoxyribonucleotide)n+m + AMP + beta-nicotinamide D-nucleotide.. DNA ligase that catalyzes the formation of phosphodiester linkages between 5'-phosphoryl and 3'-hydroxyl groups in double-stranded DNA using NAD as a coenzyme and as the energy source for the reaction. It is essential for DNA replication and repair of damaged DNA. This Neorickettsia sennetsu (strain ATCC VR-367 / Miyayama) (Ehrlichia sennetsu) protein is DNA ligase.